A 694-amino-acid polypeptide reads, in one-letter code: MSRQVSLDRLRNIGIMAHIDAGKTTTTERILFYTGRTHKLGETHEGAATMDFMVQEQERGITIQSAATTCSWKDHRINIIDTPGHVDFTVEVERSLRVLDGAVAVFCAKGGVEPQSETVWRQADKYGVPRLAYVNKMDTIGADFFRVIRMMEERLGARPVPIQIPIGAEDTFRGVVDLVRNVAIMYYDDLGKDIREEPIPEDMRELVEQYRTRMIEAATEADDALMEKYLMGEELTVEEIKRGLRKLTVECKINPVCCGSSYKNKGVQPLLDAIVDYLPSPLDIPPVQGTDPETGEPAERKADDNEPFSALAFKVVSDPYVGKLCFFRVYSGQLKSGSYVLNATKGKRERIGRLVRMHANHREEVEVVETGDIAAAVGLKDTGTGDTLCTDAAPVILESMEFPEPVIQLAVEPKTKADQDKLSTALLKLAEEDPTFRMFTDPETGQTIIAGMGELHLEIIVDRLQREFKVGVNVGKPQVSYRETVRGRVENVEGRFVRQSGGRGQYGHVVINLEPAEPGSGFIFENKIVGGVIPKEFIGPVEQGIKEALQNGVLAGYPMIDVKVELVFGSYHEVDSSEAAFKIAGSMALKAAAQKAQPVLLEPYMRVEVTVPEEYMGDVIGDLNARRGRIEGMEARGNAQVIRAQVPLAEMFGYATDLRSRTQGRGVYSMQFDHYEEVPPNVAKPIIEKAQGKA.

The region spanning 8-282 (DRLRNIGIMA…AIVDYLPSPL (275 aa)) is the tr-type G domain. GTP-binding positions include 17-24 (AHIDAGKT), 81-85 (DTPGH), and 135-138 (NKMD). The segment at 284 to 303 (IPPVQGTDPETGEPAERKAD) is disordered.

The protein belongs to the TRAFAC class translation factor GTPase superfamily. Classic translation factor GTPase family. EF-G/EF-2 subfamily.

It is found in the cytoplasm. In terms of biological role, catalyzes the GTP-dependent ribosomal translocation step during translation elongation. During this step, the ribosome changes from the pre-translocational (PRE) to the post-translocational (POST) state as the newly formed A-site-bound peptidyl-tRNA and P-site-bound deacylated tRNA move to the P and E sites, respectively. Catalyzes the coordinated movement of the two tRNA molecules, the mRNA and conformational changes in the ribosome. This is Elongation factor G from Symbiobacterium thermophilum (strain DSM 24528 / JCM 14929 / IAM 14863 / T).